The sequence spans 498 residues: Probable malate:quinone oxidoreductase 2 (498 aa).

It belongs to the MQO family. Requires FAD as cofactor.

The catalysed reaction is (S)-malate + a quinone = a quinol + oxaloacetate. The protein operates within carbohydrate metabolism; tricarboxylic acid cycle; oxaloacetate from (S)-malate (quinone route): step 1/1. The sequence is that of Probable malate:quinone oxidoreductase 2 from Staphylococcus epidermidis (strain ATCC 35984 / DSM 28319 / BCRC 17069 / CCUG 31568 / BM 3577 / RP62A).